A 601-amino-acid chain; its full sequence is Glutathione-regulated potassium-efflux system protein KefB (601 aa).

The next 13 membrane-spanning stretches (helical) occupy residues 4 to 24, 29 to 49, 55 to 75, 87 to 107, 111 to 131, 152 to 172, 177 to 197, 207 to 227, 230 to 250, 262 to 282, 284 to 304, 324 to 344, and 356 to 376; these read ADLLTAGVLFLFAAVAAVPLA, IGAVLGYLLAGIAIGPWGLGF, EILHFSELGVVFLMFIIGLEL, IFGVGAAQVLLSAAVLAGLLM, FLWQAAVVGGIGLAMSSTAMA, VLLFQDLAVIPALALVPLLAG, HFDWFKVAMKVLAFAVMLIGG, FIAASGVREVFTAATLLLVLS, LFMDALGLSMALGTFIAGVLL, AIDPFKGLLLGLFFISVGMSL, LGVLYTHLLWVAASVVILVVI, MQFASVLSQGGEFAFVLFSTA, and ALLLVTVTLSMMTTPLLMKGI. The RCK N-terminal domain maps to 400–519; that stretch reads KPQVIVVGFG…AGVTQFSRET (120 aa).

It belongs to the monovalent cation:proton antiporter 2 (CPA2) transporter (TC 2.A.37) family. KefB subfamily. Interacts with the regulatory subunit KefG.

The protein resides in the cell inner membrane. In terms of biological role, pore-forming subunit of a potassium efflux system that confers protection against electrophiles. Catalyzes K(+)/H(+) antiport. The protein is Glutathione-regulated potassium-efflux system protein KefB of Salmonella paratyphi C (strain RKS4594).